The sequence spans 217 residues: ATP-dependent Clp protease proteolytic subunit 3 (217 aa).

The span at 1–13 (MSPFTAGPAPART) shows a compositional bias: low complexity. Residues 1–23 (MSPFTAGPAPARTPRAEEGDTPA) are disordered. The Nucleophile role is filled by S108. The active site involves H133.

This sequence belongs to the peptidase S14 family. Fourteen ClpP subunits assemble into 2 heptameric rings which stack back to back to give a disk-like structure with a central cavity, resembling the structure of eukaryotic proteasomes.

Its subcellular location is the cytoplasm. The enzyme catalyses Hydrolysis of proteins to small peptides in the presence of ATP and magnesium. alpha-casein is the usual test substrate. In the absence of ATP, only oligopeptides shorter than five residues are hydrolyzed (such as succinyl-Leu-Tyr-|-NHMec, and Leu-Tyr-Leu-|-Tyr-Trp, in which cleavage of the -Tyr-|-Leu- and -Tyr-|-Trp bonds also occurs).. Cleaves peptides in various proteins in a process that requires ATP hydrolysis. Has a chymotrypsin-like activity. Plays a major role in the degradation of misfolded proteins. The chain is ATP-dependent Clp protease proteolytic subunit 3 from Streptomyces coelicolor (strain ATCC BAA-471 / A3(2) / M145).